The primary structure comprises 202 residues: Holliday junction branch migration complex subunit RuvA (202 aa).

Positions 1–65 are domain I; sequence MIGYLEGRVV…EDALELFGFA (65 aa). A domain II region spans residues 66–144; that stretch reads SLDDRETFRT…GRAPAAGLAP (79 aa). The flexible linker stretch occupies residues 145 to 155; sequence SVPIPGGVAGD. The tract at residues 155–202 is domain III; that stretch reads DVVAGLTNLGYPEPEARQVAAEVLEAEPDLDVAAALRQALKRLASAKK.

Belongs to the RuvA family. Homotetramer. Forms an RuvA(8)-RuvB(12)-Holliday junction (HJ) complex. HJ DNA is sandwiched between 2 RuvA tetramers; dsDNA enters through RuvA and exits via RuvB. An RuvB hexamer assembles on each DNA strand where it exits the tetramer. Each RuvB hexamer is contacted by two RuvA subunits (via domain III) on 2 adjacent RuvB subunits; this complex drives branch migration. In the full resolvosome a probable DNA-RuvA(4)-RuvB(12)-RuvC(2) complex forms which resolves the HJ.

It localises to the cytoplasm. Functionally, the RuvA-RuvB-RuvC complex processes Holliday junction (HJ) DNA during genetic recombination and DNA repair, while the RuvA-RuvB complex plays an important role in the rescue of blocked DNA replication forks via replication fork reversal (RFR). RuvA specifically binds to HJ cruciform DNA, conferring on it an open structure. The RuvB hexamer acts as an ATP-dependent pump, pulling dsDNA into and through the RuvAB complex. HJ branch migration allows RuvC to scan DNA until it finds its consensus sequence, where it cleaves and resolves the cruciform DNA. The polypeptide is Holliday junction branch migration complex subunit RuvA (Solidesulfovibrio magneticus (strain ATCC 700980 / DSM 13731 / RS-1) (Desulfovibrio magneticus)).